The following is a 276-amino-acid chain: SF-assemblin (276 aa).

The interval 1-31 is nonhelical region; that stretch reads MSLRPFETPGGLSSLSPRRRDFSPTRPGTNG. The tract at residues 1 to 37 is disordered; that stretch reads MSLRPFETPGGLSSLSPRRRDFSPTRPGTNGPSAKLE. Residues 32–276 are rod; it reads PSAKLEHVTE…LQEGLKLVSA (245 aa). Residues 67–145 adopt a coiled-coil conformation; it reads LLQESLQRIE…LVRDERESRR (79 aa).

Belongs to the SF-assemblin family.

It localises to the cytoplasm. It is found in the cytoskeleton. In terms of biological role, major component of the striated microtubule-associated fibers (SMAFs; system-I-fibers). This Chlamydomonas reinhardtii (Chlamydomonas smithii) protein is SF-assemblin.